A 312-amino-acid polypeptide reads, in one-letter code: Ribosomal protein L11 methyltransferase (312 aa).

S-adenosyl-L-methionine is bound by residues Thr160, Gly181, Asp203, and Asn246.

Belongs to the methyltransferase superfamily. PrmA family.

It localises to the cytoplasm. It carries out the reaction L-lysyl-[protein] + 3 S-adenosyl-L-methionine = N(6),N(6),N(6)-trimethyl-L-lysyl-[protein] + 3 S-adenosyl-L-homocysteine + 3 H(+). In terms of biological role, methylates ribosomal protein L11. This is Ribosomal protein L11 methyltransferase from Staphylococcus aureus (strain JH1).